Here is a 140-residue protein sequence, read N- to C-terminus: Large ribosomal subunit protein uL16 (140 aa).

Belongs to the universal ribosomal protein uL16 family. As to quaternary structure, part of the 50S ribosomal subunit.

Functionally, binds 23S rRNA and is also seen to make contacts with the A and possibly P site tRNAs. In Phytoplasma mali (strain AT), this protein is Large ribosomal subunit protein uL16.